We begin with the raw amino-acid sequence, 909 residues long: SCY1-like protein 2 B (909 aa).

The Protein kinase domain maps to 39–343; that stretch reads YELLDQIGSA…ALDFTGSNFF (305 aa). HEAT repeat units lie at residues 311-348, 350-382, 383-401, 402-439, 465-502, 499-537, and 578-617; these read SIPS…SDAR, RALR…DFDS, RVLR…RNLV, LQPI…TASG, VLPL…VVRQ, VVRQ…TLDK, and FTAE…KIEE. Disordered stretches follow at residues 624 to 772 and 804 to 909; these read NDSG…VAST and SASL…LDLL. Polar residues-rich tracts occupy residues 638-648, 678-712, 724-747, 804-828, and 835-852; these read NGLQFQSSTQI, PASS…TAPT, RQSS…TSFA, SASL…QDPL, and KQSQ…NNQK.

It belongs to the protein kinase superfamily. In terms of assembly, interacts with VTI11, VTI12 and CHC1. Expressed in roots, seedlings, leaves, stems, flowers, and, at low levels, in siliques.

The protein localises to the golgi apparatus membrane. Its subcellular location is the golgi apparatus. The protein resides in the trans-Golgi network membrane. It is found in the prevacuolar compartment membrane. Probably inactive kinase. Component of the AP2-containing clathrin coat that regulates clathrin-dependent trafficking at plasma membrane, TGN and endosomal system. Together with SCYL2B, required for cell growth, plant growth and development. Essential for polarized root hair development probably by mediating the root hair tip localization of cellulose synthase-like D3 (CSLD3). The chain is SCY1-like protein 2 B from Arabidopsis thaliana (Mouse-ear cress).